The chain runs to 376 residues: Putative glutamate--cysteine ligase 2-3 (376 aa).

It belongs to the glutamate--cysteine ligase type 2 family. YbdK subfamily.

It catalyses the reaction L-cysteine + L-glutamate + ATP = gamma-L-glutamyl-L-cysteine + ADP + phosphate + H(+). Its function is as follows. ATP-dependent carboxylate-amine ligase which exhibits weak glutamate--cysteine ligase activity. The chain is Putative glutamate--cysteine ligase 2-3 from Nocardioides sp. (strain ATCC BAA-499 / JS614).